Here is a 616-residue protein sequence, read N- to C-terminus: Pyrophosphate--fructose 6-phosphate 1-phosphotransferase subunit alpha (616 aa).

It belongs to the phosphofructokinase type A (PFKA) family. PPi-dependent PFK group II subfamily. Clade 'Long' sub-subfamily. In terms of assembly, tetramer of two alpha (regulatory) and two beta (catalytic) chains.

The protein resides in the cytoplasm. It participates in carbohydrate degradation; glycolysis; D-glyceraldehyde 3-phosphate and glycerone phosphate from D-glucose: step 3/4. With respect to regulation, allosterically activated by fructose 2,6-bisphosphate. Functionally, regulatory subunit of pyrophosphate--fructose 6-phosphate 1-phosphotransferase. The polypeptide is Pyrophosphate--fructose 6-phosphate 1-phosphotransferase subunit alpha (Solanum tuberosum (Potato)).